Consider the following 71-residue polypeptide: uncharacterized protein (71 aa).

The span at 1-16 (MAKSQAKKKRGHRLRN) shows a compositional bias: basic residues. Disordered regions lie at residues 1 to 39 (MAKS…RMTK) and 51 to 71 (KNPY…QKAA). Polar residues predominate over residues 25-35 (RGSTPSFSTHG). Over residues 51–64 (KNPYDHTAVDDKDF) the composition is skewed to basic and acidic residues.

This is an uncharacterized protein from Bacillus subtilis (strain 168).